A 126-amino-acid chain; its full sequence is Autophagy-related protein 8-like protein DDB_G0290491 (126 aa).

A lipid anchor (Phosphatidylethanolamine amidated glycine) is attached at Gly123. A propeptide spans 124–126 (removed in mature form); it reads SDI.

Belongs to the ATG8 family.

It is found in the membrane. This is Autophagy-related protein 8-like protein DDB_G0290491 from Dictyostelium discoideum (Social amoeba).